We begin with the raw amino-acid sequence, 805 residues long: U-box domain-containing protein 32 (805 aa).

Disordered stretches follow at residues 181–205 (SNNR…SEKL) and 226–284 (EKDT…EREG). A compositionally biased stretch (basic and acidic residues) spans 226–239 (EKDTGQLEREKVEP). Low complexity predominate over residues 245-257 (FSSGSSSSFGEPV). Residues 331–434 (LEGLCIKESS…EVNALRRLVK (104 aa)) adopt a coiled-coil conformation. The Protein kinase domain maps to 460 to 718 (FDPSWKLGEG…FIDRMKAPEV (259 aa)). Residues 466-474 (LGEGKYGSV) and lysine 487 contribute to the ATP site. The region spanning 734-805 (RPPSHYLCPI…LAIQDWQNQW (72 aa)) is the U-box domain.

It belongs to the protein kinase superfamily. Ser/Thr protein kinase family.

It catalyses the reaction S-ubiquitinyl-[E2 ubiquitin-conjugating enzyme]-L-cysteine + [acceptor protein]-L-lysine = [E2 ubiquitin-conjugating enzyme]-L-cysteine + N(6)-ubiquitinyl-[acceptor protein]-L-lysine.. Its pathway is protein modification; protein ubiquitination. Its function is as follows. Functions as an E3 ubiquitin ligase. The sequence is that of U-box domain-containing protein 32 (PUB32) from Arabidopsis thaliana (Mouse-ear cress).